A 362-amino-acid polypeptide reads, in one-letter code: Apelin receptor A (362 aa).

Residues 1–37 (METEGLSPMLYEDDYYYGNETGLQPCDETDWDFSYSL) lie on the Extracellular side of the membrane. Asn19 carries an N-linked (GlcNAc...) asparagine glycan. 2 disulfide bridges follow: Cys26–Cys286 and Cys108–Cys185. The helical transmembrane segment at 38-58 (LPVFYMIVFVLGLSGNGVVIF) threads the bilayer. Topologically, residues 59–76 (TVWKSKPKRRSADTYIGN) are cytoplasmic. The chain crosses the membrane as a helical span at residues 77 to 97 (LALADLAFVVTLPLWATYTAL). The Extracellular portion of the chain corresponds to 98–110 (GFHWPFGSALCKL). The helical transmembrane segment at 111 to 131 (SSYLVLLNMFASVFCLTCLSF) threads the bilayer. The Cytoplasmic segment spans residues 132–151 (DRYLAIVHSLSSAKLRSRSS). A helical membrane pass occupies residues 152–172 (IIVSLAVIWLFSGLLALPSLI). At 173–199 (LRDTRVEGNNTICDLDFSGVSSKENEN) the chain is on the extracellular side. Residue Asn181 is glycosylated (N-linked (GlcNAc...) asparagine). The chain crosses the membrane as a helical span at residues 200–220 (FWIGGLSILTTVPGFLLPLLL). Residues 221-248 (MTIFYCFIGGKVTMHFQNLKKEEQKKKR) lie on the Cytoplasmic side of the membrane. A helical membrane pass occupies residues 249–269 (LLKIIITLVVVFAICWLPFHI). Over 270–296 (LKTIHFLDLMGFLELSCSTQNIIVSLH) the chain is Extracellular. The chain crosses the membrane as a helical span at residues 297–317 (PYATCLAYVNSCLNPFLYAFF). Residues 318-362 (DLRFRSQCFFFFGFKKVLQGHLSNTSSSLSAQTQKSEIHSLATKV) are Cytoplasmic-facing.

This sequence belongs to the G-protein coupled receptor 1 family. As to expression, expressed in all blood vessels including the posterior cardinal vein, intersomitic veins and the vitelline vein network. At the gastrula stage, exclusively expressed in the mesodermal layer and at the neurula stage in the lateral plate mesoderm. Larval expression is observed in the endothelium of the primary blood vessels and the forming heart.

It localises to the cell membrane. G protein-coupled receptor for peptide hormones apelin (apln) and apelin receptor early endogenous ligand (apela), that plays a role in the regulation of normal cardiovascular function and fluid homeostasis. When acting as apelin receptor, activates both G(i) protein pathway that inhibits adenylate cyclase activity, and the beta-arrestin pathway that promotes internalization of the receptor. Also functions as mechanoreceptor that is activated by pathological stimuli in a G-protein-independent fashion to induce beta-arrestin signaling, hence eliciting cardiac hypertrophy. However, the presence of apelin ligand blunts cardiac hypertrophic induction from APLNR/APJ on response to pathological stimuli. Plays a key role in early development such as gastrulation, blood vessels formation and heart morphogenesis by acting as a receptor for apela hormone, promoting endoderm and mesendoderm cell migration and regulating the migration of cells fated to become myocardial progenitors, respectively. Promotes angioblast migration toward the embryonic midline, i.e. the position of the future vessel formation, during vasculogenesis. May promote sinus venosus (SV)-derived endothelial cells migration into the developing heart to promote coronary blood vessel development. Required for cardiovascular development, particularly for intersomitic vein angiogenesis by acting as a receptor for apln hormone. Also plays a role in various processes in adults such as regulation of blood vessel formation, blood pressure, heart contractility, and heart failure. Acts upstream of the i/o type of G-alpha proteins in the differentiation of endothelium, erythroid cells, myeloid cells and cardiomyocytes. The polypeptide is Apelin receptor A (aplnr-a) (Xenopus laevis (African clawed frog)).